The primary structure comprises 202 residues: Transcriptional regulator SdrP (202 aa).

The 73-residue stretch at glutamine 117–lysine 189 folds into the HTH crp-type domain. The H-T-H motif DNA-binding region spans histidine 149–glycine 168.

As to quaternary structure, homodimer.

Activates transcription. The consensus DNA-binding site of this transcriptional regulator is 5'-WWGTGAN(5-7)ACACWW-3' in which W is A or T and N is G, A, T or C. Regulated genes include those encoding proteins involved in nutrient and energy supply, redox control and polyadenylation of mRNA. Also regulates genes involved in oxidative stress response such as genes encoding manganese superoxide dismutase and catalase, and genes encoding a protein involved in nucleotide excision repair of damaged DNA and putative proteins involved in redox control, protein degradation and transcriptional regulation. The protein is Transcriptional regulator SdrP of Thermus thermophilus (strain ATCC 27634 / DSM 579 / HB8).